A 5588-amino-acid chain; its full sequence is Histone-lysine N-methyltransferase 2D (5588 aa).

The interval 1 to 61 is disordered; that stretch reads MDSQKPPAED…QKPPHDCSRG (61 aa). Residues 104-149 form a C2HC pre-PHD-type 1; degenerate zinc finger; the sequence is GPCEAVLPKEDASQIGFPEGLTPAHLGEPGGHCWAHHWCAAWSAGV. 2 PHD-type zinc fingers span residues 170–218 and 270–323; these read QRCS…PEHS and CPEC…CRLC. Residues 226–276 form a PHD-type 2; degenerate zinc finger; that stretch reads EARCAVCEGPGQLCDLLFCTSCGHHYHGACLDTALTARKRASWQCPECKVC. Residues 229 to 274 form an RING-type 1; atypical zinc finger; that stretch reads CAVCEGPGQLCDLLFCTSCGHHYHGACLDTALTARKRASWQCPECK. The segment at 276–321 adopts an RING-type 2; degenerate zinc-finger fold; sequence CQSCRKPGNDSKMLVCETCDKGYHTFCLKPPMEDLPAHSWKCKTCR. Disordered stretches follow at residues 438-908 and 922-1315; these read MPLL…SPII and LEYP…DDDT. Residues 439 to 642 are 15 X 5 AA repeats of S/P-P-P-E/P-E/A; sequence PLLPPPEESP…VSRLSPPPEE (204 aa). Over residues 440–463 the composition is skewed to pro residues; that stretch reads LLPPPEESPLSPPPEESPTSPPPE. Repeat copies occupy residues 442-446, 460-464, 469-473, and 477-481. A compositionally biased stretch (low complexity) spans 464–475; the sequence is ASRLSPPTEESP. Composition is skewed to pro residues over residues 490-512 and 519-560; these read GCPP…PLSP and LSPP…PPPE. 4 tandem repeats follow at residues 520–524, 529–533, 538–542, and 547–551. Residues 561–572 show a composition bias toward low complexity; the sequence is ASRLFPPFEESP. Pro residues predominate over residues 573–614; that stretch reads LSPPPEDSPLSPPPEASRLSPPPEDSPMSPPPEDSPMSPPPE. Tandem repeats lie at residues 574–578, 583–587, 592–596, and 610–614. The segment covering 619 to 636 has biased composition (low complexity); that stretch reads LPLPVLSHLSPLPEVSRL. Repeat unit 15 spans residues 637–641; sequence SPPPE. Pro residues predominate over residues 637 to 677; it reads SPPPEESPLSPPPEDSPASPPPEASRLSPPPEDSPASPPPE. A compositionally biased stretch (low complexity) spans 696 to 712; the sequence is DSLVSLPMEESPLSPLP. Position 727 is a phosphoserine (S727). Low complexity-rich tracts occupy residues 735-755, 836-851, and 876-893; these read LCPQ…CLSP, PSQS…FSPS, and LPEE…LSPQ. 3 stretches are compositionally biased toward pro residues: residues 894 to 908, 959 to 973, and 985 to 1012; these read LMPP…SPII, EPVP…PGSP, and LPPP…PPAL. Low complexity predominate over residues 1013 to 1023; the sequence is PLSVPSPLSPV. Residues 1033 to 1045 show a composition bias toward basic and acidic residues; it reads AELHEMETDKGPE. PHD-type zinc fingers lie at residues 1071–1124, 1121–1171, and 1198–1253; these read PSPA…PMEV, PMEV…SQGD, and LGVS…SPAR. The residue at position 1107 (S1107) is a Phosphoserine. The span at 1163 to 1172 shows a compositional bias: polar residues; sequence EISNLSQGDA. Residues 1201–1251 form an RING-type 3; atypical zinc finger; the sequence is STDVSPARDEGSLRLCTDSLPETDDSLLCDTGTATSGGKAEGDKGRRRSSP. S1205 bears the Phosphoserine mark. Phosphothreonine is present on T1223. A Phosphoserine modification is found at S1226. A compositionally biased stretch (basic residues) spans 1245–1258; that stretch reads GRRRSSPARSRIKQ. The residue at position 1562 (S1562) is a Phosphoserine. Disordered regions lie at residues 1566-1721, 1751-1846, 1886-1962, and 2095-2641; these read KRRQ…SKLE, GRPG…MESK, GLAL…SLQR, and SADG…QRQR. Basic and acidic residues predominate over residues 1593-1608; sequence PDDKKDGDLDTDDLLK. At S1627 the chain carries Phosphoserine. The span at 1631–1641 shows a compositional bias: basic and acidic residues; that stretch reads ELGKEETEESK. Composition is skewed to basic residues over residues 1658–1668 and 1709–1718; these read RQRKSHTRVKR and KQQRRARKKS. Positions 1762–1782 are enriched in basic and acidic residues; the sequence is PRADGGSDRKELMTAMHKGDD. S1791 carries the post-translational modification Phosphoserine. T1822 is modified (phosphothreonine). A compositionally biased stretch (basic and acidic residues) spans 1831-1846; the sequence is DLDRIPTEELPKMESK. Low complexity-rich tracts occupy residues 1886-1896 and 1936-1947; these read GLALGSLPSSS and TTPSTPTTPTTE. Pro residues predominate over residues 2151 to 2166; the sequence is PTYPPYPSPTGAPAQP. Residues 2170 to 2181 are compositionally biased toward low complexity; sequence GTTTRPGTGQPG. Position 2196 is a phosphoserine (S2196). T2197 bears the Phosphothreonine mark. K2203 carries the N6-acetyllysine modification. A phosphoserine mark is found at S2217 and S2231. Residues 2237 to 2249 show a composition bias toward basic and acidic residues; it reads ESRKSLEVKKEEL. 3 positions are modified to phosphoserine: S2266, S2268, and S2299. Composition is skewed to pro residues over residues 2308-2322 and 2331-2359; these read EPPP…PPSH and YPDP…PPRS. The segment covering 2366-2388 has biased composition (low complexity); that stretch reads SRVPASPQSQSSSQSPLTPRPLS. Over residues 2470-2486 the composition is skewed to polar residues; sequence GQPTNFARSPGTGTFVG. R2492 bears the Asymmetric dimethylarginine mark. The segment covering 2504-2514 has biased composition (pro residues); that stretch reads LKPPVPQPGLP. Residues 2546 to 2557 show a composition bias toward low complexity; that stretch reads PSGSPLGPNSGP. Phosphoserine is present on S2597. Residues 2610–2622 are compositionally biased toward low complexity; sequence SSSSLATPELSSA. Residues 2627 to 2665 adopt a coiled-coil conformation; the sequence is ISSLSQTELEKQRQRQRLRELLIRQQIQRNTLRQEKETA. Positions 2644–2648 match the LXXLL motif 1 motif; that stretch reads LRELL. Residues 2655-2806 form a disordered region; the sequence is RNTLRQEKET…QLWQQQQQQQ (152 aa). Residues 2665–2680 are compositionally biased toward low complexity; sequence AAAAAGAVGPPGNWGA. Polar residues-rich tracts occupy residues 2691–2704 and 2739–2748; these read SRGQ…QDRS and PSSMDMNSRQ. The stretch at 2768–2813 forms a coiled coil; the sequence is LQQQQQQQQQQQQQQQQQQQQQQQQQQQQQLWQQQQQQQQQQQQQA. Positions 2769–2806 are enriched in low complexity; sequence QQQQQQQQQQQQQQQQQQQQQQQQQQQQQLWQQQQQQQ. R2829 carries the post-translational modification Asymmetric dimethylarginine. The short motif at 3030–3034 is the LXXLL motif 2 element; it reads LDDLL. Residues 3069–3104 form a disordered region; that stretch reads NEKAEREALLRGVEPVSLGPEERPPPAPDNSEPRLT. K3071 bears the N6-acetyllysine mark. A phosphoserine mark is found at S3122 and S3193. Disordered regions lie at residues 3129-3193 and 3271-3326; these read NTPK…LNPS and QQQQ…QSMV. The span at 3271 to 3284 shows a compositional bias: low complexity; it reads QQQQQQQQQQQQQQ. K3430 carries the N6-acetyllysine modification. Disordered stretches follow at residues 3460 to 3496, 3593 to 3617, 3633 to 3661, and 3678 to 3704; these read SGGS…TFAQ, RNKQ…VLAV, LLPA…GGMV, and QQQQ…NLAL. Residues 3559–3613 are a coiled coil; sequence EKLKLVTEQQSKIQKQLDQVRKQQKEHTNLMAEYRNKQQQQQQQQQQQQQQQHSA. Residues 3596-3610 show a composition bias toward low complexity; that stretch reads QQQQQQQQQQQQQQQ. A coiled-coil region spans residues 3712–3747; that stretch reads RLLQERQLQLQQQRMQLAQKLQQQQQQQQQQQQQQH. R3725 carries the asymmetric dimethylarginine modification. 2 disordered regions span residues 3760–3780 and 3808–3827; these read PGVQ…PSNH and LQQQ…QGPH. 2 coiled-coil regions span residues 3854 to 3883 and 3912 to 4052; these read RLLT…QQQQ and SLQQ…QVTL. The disordered stretch occupies residues 4053 to 4249; sequence GPGLPVKPLQ…QGPPGAGVMP (197 aa). Low complexity-rich tracts occupy residues 4128–4159, 4172–4183, and 4226–4240; these read SQLL…PQPQ, GQQLGSGSSSES, and GSQP…QSGQ. R4255 carries the asymmetric dimethylarginine modification. Phosphoserine is present on S4272. Residues 4279–4283 carry the LXXLL motif 3 motif; sequence LQALL. A disordered region spans residues 4290–4452; that stretch reads QSQAVRQTPP…SSLVPGHLDQ (163 aa). The segment covering 4294-4305 has biased composition (polar residues); sequence VRQTPPFQEPGT. The span at 4307–4322 shows a compositional bias: low complexity; the sequence is PSPLQGLLGCQPQPGG. The short motif at 4310–4314 is the LXXLL motif 4 element; sequence LQGLL. The span at 4379–4391 shows a compositional bias: polar residues; that stretch reads QLPSPSAQLTPTH. S4410 carries the phosphoserine modification. The segment covering 4432-4445 has biased composition (polar residues); the sequence is DNLTEAQKPEQSSL. An LXXLL motif 5 motif is present at residues 4514–4518; it reads LQKLL. K4516 bears the N6-acetyllysine mark. Disordered regions lie at residues 4553 to 4596, 4664 to 4716, and 4729 to 4778; these read LQGT…EDGV, KNNL…EGAL, and AALP…QLGS. Pro residues predominate over residues 4670-4684; it reads PPTPPSSLPPTPPPS. Residue S4789 is modified to Phosphoserine. A Glycyl lysine isopeptide (Lys-Gly) (interchain with G-Cter in SUMO2) cross-link involves residue K4807. K4827 carries the N6-acetyllysine modification. Residues 4829–4874 form an RING-type 4; degenerate zinc finger; it reads KGSEVSVMLTVSAAAAKNLNGVMVAVAELLSMKIPNSYEVLFPDGP. Residues 4877–4908 are disordered; it reads AGLEPKKGEAEGPGGKEKGLSGKGPDTGPDWL. Over residues 4879–4896 the composition is skewed to basic and acidic residues; it reads LEPKKGEAEGPGGKEKGL. K4931 is covalently cross-linked (Glycyl lysine isopeptide (Lys-Gly) (interchain with G-Cter in SUMO2)). The disordered stretch occupies residues 4956-5031; it reads QLSAPPPEEP…SEDSRPPRLK (76 aa). A compositionally biased stretch (pro residues) spans 4959–4982; that stretch reads APPPEEPSPPPSPLAPSPASPPAE. The segment covering 5017–5027 has biased composition (basic and acidic residues); that stretch reads RPPEESEDSRP. The short motif at 5041–5045 is the LXXLL motif 6 element; the sequence is LRLLL. A C2HC pre-PHD-type 2 zinc finger spans residues 5080–5120; sequence NRRCCFCHEEGDGATDGPARLLNLDLDLWVHLNCALWSTEV. Residues 5141 to 5188 form a PHD-type 7 zinc finger; the sequence is TKCSLCQRTGATSSCNRMRCPNVYHFACAIRAKCMFFKDKTMLCPVHK. Positions 5226-5286 constitute an FYR N-terminal domain; the sequence is LHMFRVGGLV…CCYRCSISEN (61 aa). In terms of domain architecture, FYR C-terminal spans 5287–5372; that stretch reads NGRPEFVIKV…ESCQNYLFRY (86 aa). A WDR5 interaction motif (WIN) motif is present at residues 5388–5393; sequence GCARSE. Positions 5448–5564 constitute an SET domain; sequence NNVYLARSRI…KGEELTYDYQ (117 aa). Residues Y5502 and 5525 to 5526 contribute to the S-adenosyl-L-methionine site; that span reads NH. The Zn(2+) site is built by C5528, C5576, C5578, and C5583. Residues 5572–5588 form the Post-SET domain; sequence HKIPCHCGAWNCRKWMN.

Belongs to the class V-like SAM-binding methyltransferase superfamily. Histone-lysine methyltransferase family. TRX/MLL subfamily. Component of the MLL2 complex (also named ASCOM complex), at least composed of catalytic subunit KMT2D/MLL2, ASH2L, RBBP5, WDR5, NCOA6, DPY30, KDM6A, PAXIP1/PTIP, PAGR1 and alpha- and beta-tubulin. Forms a core complex with the evolutionary conserved subcomplex WRAD composed of WDR5, RBBP5, ASH2L/ASH2 and DPY30 subunits; WRAD differentially stimulates the methyltransferase activity. Interacts with ESR1; interaction is direct. Interacts (via WIN motif) with WDR5.

The protein localises to the nucleus. The enzyme catalyses L-lysyl(4)-[histone H3] + S-adenosyl-L-methionine = N(6)-methyl-L-lysyl(4)-[histone H3] + S-adenosyl-L-homocysteine + H(+). Histone methyltransferase that catalyzes methyl group transfer from S-adenosyl-L-methionine to the epsilon-amino group of 'Lys-4' of histone H3 (H3K4). Part of chromatin remodeling machinery predominantly forms H3K4me1 methylation marks at active chromatin sites where transcription and DNA repair take place. Acts as a coactivator for estrogen receptor by being recruited by ESR1, thereby activating transcription. This chain is Histone-lysine N-methyltransferase 2D (Kmt2d), found in Mus musculus (Mouse).